The sequence spans 306 residues: Probable zinc metalloprotease VDBG_06923 (306 aa).

An N-terminal signal peptide occupies residues 1–28 (MNYEAEQPGANDDASGVAVALELARVLA). Zn(2+) contacts are provided by D12 and E45. The N-linked (GlcNAc...) asparagine glycan is linked to N60. Position 72 (D72) interacts with Zn(2+). Residues 218–306 (APAKVNNVRV…KSPVTIPFPT (89 aa)) enclose the Fibronectin type-III domain. N-linked (GlcNAc...) asparagine glycans are attached at residues N228, N234, and N244.

The protein belongs to the peptidase M28 family. M28B subfamily. The cofactor is Zn(2+).

The protein resides in the secreted. The protein is Probable zinc metalloprotease VDBG_06923 of Verticillium alfalfae (strain VaMs.102 / ATCC MYA-4576 / FGSC 10136) (Verticillium wilt of alfalfa).